The primary structure comprises 184 residues: Large ribosomal subunit protein uL6 (184 aa).

It belongs to the universal ribosomal protein uL6 family. In terms of assembly, part of the 50S ribosomal subunit.

Its function is as follows. This protein binds to the 23S rRNA, and is important in its secondary structure. It is located near the subunit interface in the base of the L7/L12 stalk, and near the tRNA binding site of the peptidyltransferase center. The protein is Large ribosomal subunit protein uL6 of Fervidobacterium nodosum (strain ATCC 35602 / DSM 5306 / Rt17-B1).